Consider the following 109-residue polypeptide: Preprofallaxidin-8 (109 aa).

Positions 1 to 22 (MASLKKSLFLVLFLGLLSLSIC) are cleaved as a signal peptide. Positions 23-46 (EEQKRENEEDAEDENHEEESEEKR) are excised as a propeptide. Positions 27-46 (RENEEDAEDENHEEESEEKR) are disordered. Positions 30–42 (EEDAEDENHEEES) are enriched in acidic residues. The residue at position 62 (Leu-62) is a Leucine amide. A propeptide spanning residues 66–70 (SEEKR) is cleaved from the precursor. Met-75 bears the Methionine amide mark. A propeptide spanning residues 79 to 83 (SEEKR) is cleaved from the precursor. Met-88 is modified (methionine amide). 2 consecutive propeptides follow at residues 92-96 (SEEKR) and Ala-108.

It belongs to the frog skin active peptide (FSAP) family. Brevinin subfamily. As to expression, expressed by the skin glands.

It is found in the secreted. Its function is as follows. Fallaxidin-2.1 shows no antibacterial activity against Gram-positive or Gram-negative bacteria. Does not inhibit the formation of NO by neuronal nitric oxide synthase. Has no effect on splenocyte proliferation or smooth muscle contraction. Functionally, fallaxidin-3.2 shows antibacterial activity against the Gram-positive bacteria E.faecalis (MIC=100 uM) and L.lactis (MIC=500 uM). No antibacterial activity against the Gram-positive bacteria B.cereus, L.innocua, M.luteus, S.epidermidis, S.uberis and S.aureus, or the Gram-negative bacteria E.cloacae and E.coli. This Litoria fallax (Eastern dwarf tree frog) protein is Preprofallaxidin-8.